Consider the following 20-residue polypeptide: MAIVGTIIKIIKAIIDIFAK.

This sequence belongs to the phenol-soluble modulin alpha peptides family.

Its function is as follows. Peptide which can recruit, activate and subsequently lyse neutrophils, thus eliminating the main cellular defense against infection. The protein is Phenol-soluble modulin alpha 4 peptide (psmA4) of Staphylococcus aureus (strain bovine RF122 / ET3-1).